The sequence spans 445 residues: tRNA-2-methylthio-N(6)-dimethylallyladenosine synthase (445 aa).

One can recognise an MTTase N-terminal domain in the interval 7–121 (KTFYIETFGC…LPEMLVQLEA (115 aa)). Positions 16, 52, 84, 158, 162, and 165 each coordinate [4Fe-4S] cluster. Residues 144–374 (RDNPHRAYLT…QEKQRAIQIR (231 aa)) enclose the Radical SAM core domain. A TRAM domain is found at 377–443 (AEMIGSIQEV…PNSLVGESAA (67 aa)).

This sequence belongs to the methylthiotransferase family. MiaB subfamily. In terms of assembly, monomer. [4Fe-4S] cluster serves as cofactor.

It localises to the cytoplasm. It carries out the reaction N(6)-dimethylallyladenosine(37) in tRNA + (sulfur carrier)-SH + AH2 + 2 S-adenosyl-L-methionine = 2-methylsulfanyl-N(6)-dimethylallyladenosine(37) in tRNA + (sulfur carrier)-H + 5'-deoxyadenosine + L-methionine + A + S-adenosyl-L-homocysteine + 2 H(+). Functionally, catalyzes the methylthiolation of N6-(dimethylallyl)adenosine (i(6)A), leading to the formation of 2-methylthio-N6-(dimethylallyl)adenosine (ms(2)i(6)A) at position 37 in tRNAs that read codons beginning with uridine. The polypeptide is tRNA-2-methylthio-N(6)-dimethylallyladenosine synthase (Solibacter usitatus (strain Ellin6076)).